The following is a 626-amino-acid chain: Chaperone protein HtpG (626 aa).

Residues 1–331 (MSETVERHEF…TDDLPLNVSR (331 aa)) are a; substrate-binding. The interval 332–544 (EMLQSTPTLQ…GMGPDLQMQR (213 aa)) is b. Positions 545–626 (LLRRAGRGFG…GTAAKPAESA (82 aa)) are c.

This sequence belongs to the heat shock protein 90 family. Homodimer.

The protein resides in the cytoplasm. Molecular chaperone. Has ATPase activity. The polypeptide is Chaperone protein HtpG (Methylorubrum extorquens (strain PA1) (Methylobacterium extorquens)).